A 349-amino-acid polypeptide reads, in one-letter code: Insulin gene enhancer protein ISL-1 (349 aa).

LIM zinc-binding domains lie at 17–70 and 79–133; these read CVGC…CKRD and CAKC…RADH. Positions 181–240 form a DNA-binding region, homeobox; the sequence is TTRVRTVLNEKQLHTLRTCYAANPRPDALMKEQLVEMTGLSPRVIRVWFQNKRCKDKKRS. The segment at 312-349 is disordered; the sequence is VNFSEGGPGSNSTGSEVASMSSQLPDTPNSMVASPIEA. Residues 321–343 are compositionally biased toward polar residues; sequence SNSTGSEVASMSSQLPDTPNSMV.

It localises to the nucleus. In terms of biological role, acts as a transcriptional regulator. Recognizes and binds to the consensus octamer binding site 5'-ATAATTAA-3' in promoter of target genes. Plays a fundamental role in the gene regulatory network essential for retinal ganglion cell (RGC) differentiation. Binds to insulin gene enhancer sequences. Defines subclasses of motoneurons that segregate into columns in the spinal cord and select distinct axon pathways. Acts in conjunction with LHX1, LHX3 and ISL2. Binds to insulin gene enhancer sequences. Essential for heart development. The protein is Insulin gene enhancer protein ISL-1 (ISL1) of Gallus gallus (Chicken).